The sequence spans 177 residues: Transmembrane protein 275 (177 aa).

The tract at residues 1–20 is disordered; sequence MPQAKKSTETLAPAPPGRSR. 2 helical membrane-spanning segments follow: residues 36-56 and 63-83; these read GLCV…AAFL and LVVG…CCVC. The disordered stretch occupies residues 113–177; the sequence is ESSERTAQDT…LNFPRDPAAS (65 aa). The segment covering 128–161 has biased composition (low complexity); the sequence is SPAASAASSGRSSPGPGLFALDPPAPATAAPYLP.

It localises to the membrane. The sequence is that of Transmembrane protein 275 from Mus musculus (Mouse).